A 144-amino-acid chain; its full sequence is Large ribosomal subunit protein uL16 (144 aa).

The segment covering 1–14 (MLTPKRVKHRKQHR) has biased composition (basic residues). The tract at residues 1-22 (MLTPKRVKHRKQHRPSLAGKAN) is disordered.

Belongs to the universal ribosomal protein uL16 family. In terms of assembly, part of the 50S ribosomal subunit.

Functionally, binds 23S rRNA and is also seen to make contacts with the A and possibly P site tRNAs. This chain is Large ribosomal subunit protein uL16, found in Syntrophomonas wolfei subsp. wolfei (strain DSM 2245B / Goettingen).